The sequence spans 108 residues: Cell division protein FtsL (108 aa).

The Cytoplasmic segment spans residues 1-24; the sequence is MSKDTASQPSLTKLIGLDIFGVGR. A helical transmembrane segment spans residues 25–45; that stretch reads LHAILLICIFLSAIGVVLATH. Residues 46–108 lie on the Periplasmic side of the membrane; it reads NTRQMTVQRE…PDKEVIIKLR (63 aa).

The protein belongs to the FtsL family. As to quaternary structure, part of a complex composed of FtsB, FtsL and FtsQ.

The protein localises to the cell inner membrane. Functionally, essential cell division protein. May link together the upstream cell division proteins, which are predominantly cytoplasmic, with the downstream cell division proteins, which are predominantly periplasmic. The polypeptide is Cell division protein FtsL (Aliivibrio fischeri (strain ATCC 700601 / ES114) (Vibrio fischeri)).